A 330-amino-acid polypeptide reads, in one-letter code: Serine/threonine-protein phosphatase beta isoform (330 aa).

4 residues coordinate Mn(2+): D63, H65, D91, and N123. Residue H124 is the Proton donor of the active site. Mn(2+) contacts are provided by H172 and H247. Residues 308–319 (GMNSSRPTTPQR) show a composition bias toward polar residues. The interval 308-330 (GMNSSRPTTPQRSAPMLATNKKK) is disordered. 2 positions are modified to phosphothreonine: T315 and T316.

The protein belongs to the PPP phosphatase family. PP-1 subfamily. As to quaternary structure, interacts with Nop17l. Interacts with uri; uri inhibits flw phosphatase activity. Mn(2+) is required as a cofactor.

The catalysed reaction is O-phospho-L-seryl-[protein] + H2O = L-seryl-[protein] + phosphate. It carries out the reaction O-phospho-L-threonyl-[protein] + H2O = L-threonyl-[protein] + phosphate. Its function is as follows. Required for cell adhesion in non-muscle tissues and in maintenance of muscle attachment. Vital for larval development. The protein is Serine/threonine-protein phosphatase beta isoform (flw) of Drosophila melanogaster (Fruit fly).